Reading from the N-terminus, the 101-residue chain is NAD(P)H-quinone oxidoreductase subunit 4L, chloroplastic (101 aa).

The next 3 helical transmembrane spans lie at 2 to 22, 32 to 52, and 61 to 81; these read ILEH…YGLI, MCLE…SDFF, and IFSI…LAIV.

Belongs to the complex I subunit 4L family. As to quaternary structure, NDH is composed of at least 16 different subunits, 5 of which are encoded in the nucleus.

Its subcellular location is the plastid. The protein resides in the chloroplast thylakoid membrane. It carries out the reaction a plastoquinone + NADH + (n+1) H(+)(in) = a plastoquinol + NAD(+) + n H(+)(out). It catalyses the reaction a plastoquinone + NADPH + (n+1) H(+)(in) = a plastoquinol + NADP(+) + n H(+)(out). Functionally, NDH shuttles electrons from NAD(P)H:plastoquinone, via FMN and iron-sulfur (Fe-S) centers, to quinones in the photosynthetic chain and possibly in a chloroplast respiratory chain. The immediate electron acceptor for the enzyme in this species is believed to be plastoquinone. Couples the redox reaction to proton translocation, and thus conserves the redox energy in a proton gradient. In Oenothera argillicola (Appalachian evening primrose), this protein is NAD(P)H-quinone oxidoreductase subunit 4L, chloroplastic.